The sequence spans 775 residues: MKRSGTLRLLSDLSAFGGAARLRELVAGDSAVRVRGSPDGRHLLLLRPPGAVAPQLLVASRGPGAELERAWPAGQPSPLDAFFLPWPARPALVLVWESGLAEVWGAGVGPGWRPLQSTELCPGGGARVVAVAALRGRLVWCEERQARAEGPSGSPAAAFSHCVCVRTLEPSGEASTSLGRTHVLLHHCPAFGLLASCRQLFLVPTATTWPGVAHVLLIWSPGKGKVMVAAPRLGLSYSKSLNPGRGDTWDFRTLLRGLPGLLSPREPLAVHTWAPTPQGLLLLDFGGTVSLLQSHGGTRAVGTLQEAPVGPWGSAALGTFQGTLACVLGSTLELLDMGSGQLLERKVLSTDRVHLLEPPAPGMEDEEELETRGNLRLLSALGLFCVGWEAPQGVELPSAKDLVFEEACGYYQRRSLRGAQLTPEELRHSSTFRAPQALASILQGHLPPSALLTMLRTELRDYRGLEQLKAQLVAGDDEEAGWTELAEQEVARLLRTELIGDQLAQLNTVFQALPTAAWGATLRALQLQLDGNGKLRSQAPPDVWKKVLGGITAGKEPPNGILPPFELLCQCLCQLEPRWLPPFVELAQQQGGPGWGAGGPGLPLYRRALAVLGEEGTRPEALELELLLSSGRPKAVLQAVGQLVQKEQWDRALDAGLALGPSSPLLRSEIFKLLLAEFAQHRRLDAHLPLLCRLCPPELAPAELLLLLRTYLPDEVGPPTPFPEPGAEPPLTVGLLKALLEQTGAQGWLSGPVLSPYEDILWDPSTPPPTPPRDL.

Component of the biogenesis of lysosome-related organelles complex-2 (or BLOC2) composed of HPS3, HPS5 and HPS6. Interacts with HPS5 and HPS3. Interacts with biogenesis of lysosome-related organelles complex-1 (BLOC1). Interacts with AP-3 complex. Interacts with MNAT1. Interacts with DCTN1 and dynein intermediate chain. Ubiquitous.

Its subcellular location is the microsome membrane. The protein resides in the cytoplasm. It is found in the cytosol. The protein localises to the early endosome membrane. It localises to the lysosome membrane. In terms of biological role, may regulate the synthesis and function of lysosomes and of highly specialized organelles, such as melanosomes and platelet dense granules. Acts as a cargo adapter for the dynein-dynactin motor complex to mediate the transport of lysosomes from the cell periphery to the perinuclear region. Facilitates retrograde lysosomal trafficking by linking the motor complex to lysosomes, and perinuclear positioning of lysosomes is crucial for the delivery of endocytic cargos to lysosomes, for lysosome maturation and functioning. In Homo sapiens (Human), this protein is BLOC-2 complex member HPS6 (HPS6).